The sequence spans 132 residues: MVMTDPIADYLTRIRNANMAKHDSVEIPASNIKKSISEILKREGFIRDYEVADDNKQGVIKVFLKYGPNGERVISGLKRISKPGLRNYVSAEDLPKVLNGLGIAIVSTSAGVITDKEARQKNVGGEVIAYVW.

Belongs to the universal ribosomal protein uS8 family. Part of the 30S ribosomal subunit. Contacts proteins S5 and S12.

Its function is as follows. One of the primary rRNA binding proteins, it binds directly to 16S rRNA central domain where it helps coordinate assembly of the platform of the 30S subunit. In Lactobacillus helveticus (strain DPC 4571), this protein is Small ribosomal subunit protein uS8.